The sequence spans 223 residues: Cytidylate kinase (223 aa).

12–20 (GPAGSGKST) serves as a coordination point for ATP.

Belongs to the cytidylate kinase family. Type 1 subfamily.

It localises to the cytoplasm. The enzyme catalyses CMP + ATP = CDP + ADP. It carries out the reaction dCMP + ATP = dCDP + ADP. The sequence is that of Cytidylate kinase from Onion yellows phytoplasma (strain OY-M).